The following is a 138-amino-acid chain: MKGGESKAEATSTDQRLKTRGRKAGKKTKKDPNQPKRPPSAFFVFLEDFRKEFNLANPNNKSVATVGKAAGARWKAMTDEDKAPYVAKAESRKTEYIKNVQQYNLKLASGTNREEDDSDKSKSEVDEAVSEEEAEDDD.

Disordered regions lie at residues 1-41 (MKGG…PPSA) and 105-138 (LKLA…EDDD). Basic residues predominate over residues 18–29 (KTRGRKAGKKTK). The segment at residues 35–104 (PKRPPSAFFV…EYIKNVQQYN (70 aa)) is a DNA-binding region (HMG box). 2 positions are modified to phosphoserine: serine 123 and serine 130. Residues 126–138 (DEAVSEEEAEDDD) show a composition bias toward acidic residues.

Belongs to the HMGB family. In terms of tissue distribution, mostly expressed roots and flowers, and, to a lower extent, in stems and leaves.

The protein localises to the nucleus. The protein resides in the cytoplasm. It localises to the cytosol. Functionally, binds preferentially double-stranded DNA. The sequence is that of High mobility group B protein 4 (HMGB4) from Arabidopsis thaliana (Mouse-ear cress).